The chain runs to 280 residues: 2-dehydro-3-deoxyphosphooctonate aldolase (280 aa).

Belongs to the KdsA family.

It is found in the cytoplasm. It carries out the reaction D-arabinose 5-phosphate + phosphoenolpyruvate + H2O = 3-deoxy-alpha-D-manno-2-octulosonate-8-phosphate + phosphate. Its pathway is carbohydrate biosynthesis; 3-deoxy-D-manno-octulosonate biosynthesis; 3-deoxy-D-manno-octulosonate from D-ribulose 5-phosphate: step 2/3. The protein operates within bacterial outer membrane biogenesis; lipopolysaccharide biosynthesis. The chain is 2-dehydro-3-deoxyphosphooctonate aldolase from Nitrosococcus oceani (strain ATCC 19707 / BCRC 17464 / JCM 30415 / NCIMB 11848 / C-107).